We begin with the raw amino-acid sequence, 521 residues long: FAD-dependent monooxygenase DEP2 (521 aa).

An N-terminal signal peptide occupies residues 1–22 (MHDSPPFKVIIVGAGVTGLTLA). The FAD site is built by Asp36 and Arg109. Residues Asn139 and Asn220 are each glycosylated (N-linked (GlcNAc...) asparagine). FAD contacts are provided by Asp310 and Gly323. A helical membrane pass occupies residues 477-497 (ILVLWAGLWLAICFFHLVFSG). The N-linked (GlcNAc...) asparagine glycan is linked to Asn515.

The protein belongs to the paxM FAD-dependent monooxygenase family. It depends on FAD as a cofactor.

It is found in the membrane. Its pathway is polyketide biosynthesis. Its function is as follows. Part of the gene cluster that mediates the biosynthesis of depudecin, a highly oxidized eleven-carbon linear polyketide that acts as a histone deacetylase (HDAC) inhibitor and makes a small contribution to pathogenesis. The reducing polyketide synthase DEP5 is the central enzyme in depudecin biosynthesis by yielding the backbone polyketide chain. The monooxygenases DEP2 and DEP4, as well as the uncharacterized protein DEP1, then act as tailoring enzymes to modify the intermediate polyketide chain into depudecin. In Fusarium langsethiae, this protein is FAD-dependent monooxygenase DEP2.